Consider the following 270-residue polypeptide: Checkpoint signal transducer rad24 (270 aa).

A phosphoserine mark is found at serine 34 and serine 66. The tract at residues 242–270 is disordered; sequence AAAGGNTEGAQENAPSNAPEGEAEPKADA.

It belongs to the 14-3-3 family. In terms of assembly, homodimer. Binds preferentially to mei2 phosphorylated by ran1/pat1. Binds preferentially to cdc25 phosphorylated by srk1 during G2; the interaction is increased during osmotic stress. Interacts with byr2. Interacts with rad25.

It is found in the cytoplasm. Functionally, acts in cell cycle and stress checkpoint signaling by sequestering signal transducers regulated by the checkpoints. Required for the DNA damage checkpoint that ensures that DNA damage is repaired before mitosis is attempted. During environmental stress, sequesters srk1-phosphorylated cdc25 in the cytoplasm to delay the G2/M transition. Sequesters byr2 in the cytoplasm to prevent its translocation to the plasma membrane. Sequesters ran1/pat1-phosphorylated mei2 from its non-coding RNA activators (including meiRNA), to prevent meiotic induction in vegetative cells and to regulate meiosis I. The sequence is that of Checkpoint signal transducer rad24 from Schizosaccharomyces pombe (strain 972 / ATCC 24843) (Fission yeast).